The following is a 795-amino-acid chain: Phenylalanine--tRNA ligase beta subunit (795 aa).

Residues 39–148 (AGEFNGVVVG…ADAPVGKDFR (110 aa)) form the tRNA-binding domain. Residues 401 to 476 (PKLNKVQLRR…RIYGYNSIPN (76 aa)) enclose the B5 domain. Positions 454, 460, 463, and 464 each coordinate Mg(2+). The region spanning 701–794 (SKFPANKRDL…LKDRFNAYLR (94 aa)) is the FDX-ACB domain.

Belongs to the phenylalanyl-tRNA synthetase beta subunit family. Type 1 subfamily. As to quaternary structure, tetramer of two alpha and two beta subunits. The cofactor is Mg(2+).

It is found in the cytoplasm. The enzyme catalyses tRNA(Phe) + L-phenylalanine + ATP = L-phenylalanyl-tRNA(Phe) + AMP + diphosphate + H(+). This Mannheimia succiniciproducens (strain KCTC 0769BP / MBEL55E) protein is Phenylalanine--tRNA ligase beta subunit.